The following is a 147-amino-acid chain: Transcriptional regulator MraZ (147 aa).

2 SpoVT-AbrB domains span residues 5 to 47 (QQLR…SEKE) and 76 to 123 (TFEI…SKSK).

This sequence belongs to the MraZ family. In terms of assembly, forms oligomers.

The protein localises to the cytoplasm. It localises to the nucleoid. The sequence is that of Transcriptional regulator MraZ from Mycoplasmopsis synoviae (strain 53) (Mycoplasma synoviae).